We begin with the raw amino-acid sequence, 993 residues long: Synaptonemal complex protein 1 (993 aa).

Positions 98–108 (PMSRLYSKLYK) match the Mediates head to head self-assembly of N-terminal ends motif. Positions 114–117 (KKWK) match the Nuclear localization signal motif. 2 coiled-coil regions span residues 117–172 (KVSI…LIKE) and 215–688 (IEKM…EIEN). The interval 203–359 (ETRQVYVDLN…SQLTEVKEAQ (157 aa)) is interaction with SYCE3. The interval 694 to 788 (GKLLGEVEKA…VSLKKQLEIE (95 aa)) is required for pH-induced assembly of C-terminal ends into antiparallel tetramers. A Nuclear localization signal motif is present at residues 697–700 (LGEV). Residues 764 to 808 (KIALETELSNIRNELVSLKKQLEIEKEEKEKLKMAKENTAILKDK) are a coiled coil. The DNA-binding stretch occupies residues 801 to 993 (NTAILKDKKD…RLKEAEKLFS (193 aa)). Serine 820 carries the phosphoserine modification. Residues 824 to 861 (TSWKFDSKTTPSQNISRLSSSMDSGKSKDNRDNLRASA) form a disordered region. The span at 831-847 (KTTPSQNISRLSSSMDS) shows a compositional bias: polar residues. Residues 848 to 857 (GKSKDNRDNL) show a composition bias toward basic and acidic residues. A Nuclear localization signal motif is present at residues 898–901 (KKRK).

Structural component of synaptonemal complexes. Homotetramer that consists of an N-terminal four-helical bundle that bifurcates into two elongated C-terminal dimeric coiled coils. This tetrameric building block potentially self-assembles into a supramolecular zipper-like lattice to mediate meiotic chromosome synapsis. Self-assembly is likely initiated by local proton density at chromosome axis, which is predicted to trigger antiparallel back to back assembly of adjacent C-terminal ends into tetrameric structures that anchor to chromosomal DNA. Then the N-terminal ends are predicted to undergo cooperative antiparallel head to head assembly at the midline of synaptonemal complexes central element to form a zipper-like lattice between properly aligned homologous chromosomes. The nascent synapsis generated by SYCP1 is stabilized through interaction with central element proteins SYCE1 and SYCE2. Interacts (via tetrameric core) with SYCE3; the interaction remodels SYCP1 homotetramers to 2:1 heterotrimers with SYCE3. SYCP1/SYCE3 heterotrimers form lattice assemblies as part of the mature synaptonemal complex via both lateral and head-to-head interactions. Forms a complex with EWSR1, PRDM9, SYCP3 and REC8; complex formation is dependent of phosphorylated form of REC8 and requires PRDM9 bound to hotspot DNA; EWSR1 joins PRDM9 with the chromosomal axis through REC8. Interacts with SPO16. As to expression, detected in testis. Detected in spermatocytes (at protein level).

The protein localises to the nucleus. The protein resides in the chromosome. It is found in the centromere. Its function is as follows. Major component of the transverse filaments of synaptonemal complexes, formed between homologous chromosomes during meiotic prophase. Required for normal assembly of the central element of the synaptonemal complexes. Required for normal centromere pairing during meiosis. Required for normal meiotic chromosome synapsis during oocyte and spermatocyte development and for normal male and female fertility. This is Synaptonemal complex protein 1 from Mus musculus (Mouse).